Here is a 220-residue protein sequence, read N- to C-terminus: Large ribosomal subunit protein uL3 (220 aa).

The tract at residues 113 to 143 (GTTKGHGYQGNIHKDGQRRGPMAHGSRYHRR) is disordered.

The protein belongs to the universal ribosomal protein uL3 family. In terms of assembly, part of the 50S ribosomal subunit. Forms a cluster with proteins L14 and L19.

In terms of biological role, one of the primary rRNA binding proteins, it binds directly near the 3'-end of the 23S rRNA, where it nucleates assembly of the 50S subunit. This Limosilactobacillus fermentum (strain NBRC 3956 / LMG 18251) (Lactobacillus fermentum) protein is Large ribosomal subunit protein uL3.